A 284-amino-acid chain; its full sequence is tRNA uridine(34) hydroxylase (284 aa).

The 95-residue stretch at 132–226 (AGRPVVMLDT…YFEEVGGAHY (95 aa)) folds into the Rhodanese domain. C186 acts as the Cysteine persulfide intermediate in catalysis.

This sequence belongs to the TrhO family.

The catalysed reaction is uridine(34) in tRNA + AH2 + O2 = 5-hydroxyuridine(34) in tRNA + A + H2O. In terms of biological role, catalyzes oxygen-dependent 5-hydroxyuridine (ho5U) modification at position 34 in tRNAs. This Burkholderia cenocepacia (strain HI2424) protein is tRNA uridine(34) hydroxylase.